Consider the following 128-residue polypeptide: Small ribosomal subunit protein uS9 (128 aa).

The span at 97–113 (RSEGFMTRDPRSVERKK) shows a compositional bias: basic and acidic residues. Residues 97–128 (RSEGFMTRDPRSVERKKPGQPKARRRFQFSKR) are disordered. The segment covering 114 to 128 (PGQPKARRRFQFSKR) has biased composition (basic residues).

The protein belongs to the universal ribosomal protein uS9 family.

This chain is Small ribosomal subunit protein uS9, found in Bacteroides fragilis (strain ATCC 25285 / DSM 2151 / CCUG 4856 / JCM 11019 / LMG 10263 / NCTC 9343 / Onslow / VPI 2553 / EN-2).